We begin with the raw amino-acid sequence, 584 residues long: Zinc finger and BTB domain-containing protein 7A (584 aa).

In terms of domain architecture, BTB spans 34-101; that stretch reads CDVVILVEGR…AYTATLTVST (68 aa). The interval 220–313 is disordered; that stretch reads YGPGPPAERP…EDGDGPDVDG (94 aa). The segment at 277-584 is mediates interaction with KHDRBS1; sequence EEEAASLSEA…TDGNFTAGLA (308 aa). Over residues 281-290 the composition is skewed to low complexity; the sequence is ASLSEAAPEP. Phosphoserine is present on residues Ser337 and Ser341. Residues 349–584 are mediates interaction with RELA; sequence MDYYLKYFSG…TDGNFTAGLA (236 aa). The segment at 377–584 is mediates interaction with SMAD4; that stretch reads RAKAFQKCPI…TDGNFTAGLA (208 aa). 2 C2H2-type zinc fingers span residues 382-404 and 410-432; these read QKCP…IRTH and YECN…MRKH. Residue Lys436 forms a Glycyl lysine isopeptide (Lys-Gly) (interchain with G-Cter in SUMO2) linkage. A C2H2-type 3 zinc finger spans residues 438–460; it reads YLCQQCGAAFAHNYDLKNHMRVH. A C2H2-type 4; atypical zinc finger spans residues 466–490; the sequence is YQCDSCCKTFVRSDHLHRHLKKDGC. Residues 486-584 are disordered; it reads KKDGCNGVPS…TDGNFTAGLA (99 aa). Residues 505 to 527 show a composition bias toward low complexity; sequence GGAPDPSPGATATPGAPAQPSSP. A phosphoserine mark is found at Ser511, Ser525, and Ser526. Residues 528–540 are compositionally biased toward basic and acidic residues; the sequence is DARRNGQEKHFKD. Lys539 is covalently cross-linked (Glycyl lysine isopeptide (Lys-Gly) (interchain with G-Cter in SUMO2)). At Ser549 the chain carries Phosphoserine. Over residues 560–572 the composition is skewed to gly residues; it reads GAGGGGDSGGGPG.

As to quaternary structure, homodimer. Interacts with BCL6. Interacts with RELA; involved in the control by RELA of the accessibility of target gene promoters. Interacts with AR (via NR LBD domain); the interaction is direct and androgen-dependent. Interacts with NCOR1. Interacts with NCOR2. Interacts with SMAD4; the interaction is direct and stimulated by TGFB1. Interacts with HDAC1. Interacts with SP1; ZBTB7A prevents the binding to GC-rich motifs in promoters and represses the transcriptional activity of SP1. Interacts with the DNA-dependent protein kinase complex/DNA-PKc. Interacts with KHDRBS1; negatively regulates KHDRBS1 splicing activity. Post-translationally, sumoylated. Undergoes sumoylation with SUMO1 that may regulate its transcriptional activity. As to expression, widely expressed. In normal thymus, expressed in medullary epithelial cells and Hassle's corpuscles (at protein level). In tonsil, expressed in squamous epithelium and germinal center lymphocytes (at protein level). Up-regulated in a subset of lymphomas, as well as in a subset of breast, lung, colon, prostate and bladder carcinomas (at protein level). Expressed in adipose tissues.

It is found in the nucleus. Transcription factor that represses the transcription of a wide range of genes involved in cell proliferation and differentiation. Directly and specifically binds to the consensus sequence 5'-[GA][CA]GACCCCCCCCC-3' and represses transcription both by regulating the organization of chromatin and through the direct recruitment of transcription factors to gene regulatory regions. Negatively regulates SMAD4 transcriptional activity in the TGF-beta signaling pathway through these two mechanisms. That is, recruits the chromatin regulator HDAC1 to the SMAD4-DNA complex and in parallel prevents the recruitment of the transcriptional activators CREBBP and EP300. Collaborates with transcription factors like RELA to modify the accessibility of gene transcription regulatory regions to secondary transcription factors. Also directly interacts with transcription factors like SP1 to prevent their binding to DNA. Functions as an androgen receptor/AR transcriptional corepressor by recruiting NCOR1 and NCOR2 to the androgen response elements/ARE on target genes. Thereby, negatively regulates androgen receptor signaling and androgen-induced cell proliferation. Involved in the switch between fetal and adult globin expression during erythroid cells maturation. Through its interaction with the NuRD complex regulates chromatin at the fetal globin genes to repress their transcription. Specifically represses the transcription of the tumor suppressor ARF isoform from the CDKN2A gene. Efficiently abrogates E2F1-dependent CDKN2A transactivation. Regulates chondrogenesis through the transcriptional repression of specific genes via a mechanism that also requires histone deacetylation. Regulates cell proliferation through the transcriptional regulation of genes involved in glycolysis. Involved in adipogenesis through the regulation of genes involved in adipocyte differentiation. Plays a key role in the differentiation of lymphoid progenitors into B and T lineages. Promotes differentiation towards the B lineage by inhibiting the T-cell instructive Notch signaling pathway through the specific transcriptional repression of Notch downstream target genes. Also regulates osteoclast differentiation. May also play a role, independently of its transcriptional activity, in double-strand break repair via classical non-homologous end joining/cNHEJ. Recruited to double-strand break sites on damage DNA, interacts with the DNA-dependent protein kinase complex and directly regulates its stability and activity in DNA repair. May also modulate the splicing activity of KHDRBS1 toward BCL2L1 in a mechanism which is histone deacetylase-dependent and thereby negatively regulates the pro-apoptotic effect of KHDRBS1. This chain is Zinc finger and BTB domain-containing protein 7A, found in Homo sapiens (Human).